Consider the following 828-residue polypeptide: Sarcolemmal membrane-associated protein (828 aa).

A necessary for targeting to centrosomes region spans residues 1–163; the sequence is MPSALAIFTC…AANTPSMYSQ (163 aa). Residues 1–802 are Cytoplasmic-facing; it reads MPSALAIFTC…REKGNNKPWP (802 aa). Residues 28-85 form the FHA domain; the sequence is IKIGRSVARCRPAQNNATFDCKVLSRNHALVWFDHKTGKFYLQDTKSSNGTFINSQRL. A Phosphoserine modification is found at Ser148. Coiled-coil stretches lie at residues 167-202 and 230-388; these read QLSQ…ASDT and NQTE…QEKT. The chain crosses the membrane as a helical; Anchor for type IV membrane protein span at residues 339–359; the sequence is KKELQHKIDEMEEKEQELQAK. A compositionally biased stretch (basic and acidic residues) spans 433-446; sequence KLSKENQTRAKESD. Positions 433-467 are disordered; sequence KLSKENQTRAKESDFSDTLSPSKEKSSDDTTDAQM. A phosphoserine mark is found at Ser448 and Ser452. Positions 477 to 799 form a coiled coil; the sequence is AKVSLLKDDL…KLLREKGNNK (323 aa). A helical; Anchor for type IV membrane protein transmembrane segment spans residues 803–823; the sequence is WMPMLAALVAVTAIVLYVPGL. Topologically, residues 824–828 are extracellular; it reads ARASP.

Belongs to the SLMAP family. Homodimer. Interacts with myosin. Interacts with SIKE1 and both associate with the STRIPAK core complex composed of PP2A catalytic and scaffolding subunits, the striatins (PP2A regulatory subunits), the striatin-associated proteins MOB4, STRIP1 and STRIP2, PDCD10 and members of the STE20 kinases, such as STK24 and STK26. Interacts (via FHA domain) with STK3 (when phosphorylated); the interaction associates STK3 with the STRIPAK complex.

It is found in the cell membrane. It localises to the sarcolemma. The protein localises to the cytoplasm. The protein resides in the myofibril. Its subcellular location is the sarcomere. It is found in the m line. It localises to the z line. The protein localises to the cytoskeleton. The protein resides in the microtubule organizing center. Its subcellular location is the centrosome. It is found in the endoplasmic reticulum membrane. It localises to the mitochondrion membrane. In terms of biological role, associates with the striatin-interacting phosphatase and kinase (STRIPAK) core complex, forming the extended (SIKE1:SLMAP)STRIPAK complex. The (SIKE1:SLMAP)STRIPAK complex dephosphorylates STK3 leading to the inhibition of Hippo signaling and the control of cell growth. May play a role during myoblast fusion. This chain is Sarcolemmal membrane-associated protein, found in Homo sapiens (Human).